The sequence spans 211 residues: Methylthioribulose-1-phosphate dehydratase (211 aa).

Zn(2+)-binding residues include His-105 and His-107.

It belongs to the aldolase class II family. MtnB subfamily. Zn(2+) serves as cofactor.

The catalysed reaction is 5-(methylsulfanyl)-D-ribulose 1-phosphate = 5-methylsulfanyl-2,3-dioxopentyl phosphate + H2O. Its pathway is amino-acid biosynthesis; L-methionine biosynthesis via salvage pathway; L-methionine from S-methyl-5-thio-alpha-D-ribose 1-phosphate: step 2/6. Catalyzes the dehydration of methylthioribulose-1-phosphate (MTRu-1-P) into 2,3-diketo-5-methylthiopentyl-1-phosphate (DK-MTP-1-P). The chain is Methylthioribulose-1-phosphate dehydratase from Acidiphilium cryptum (strain JF-5).